A 274-amino-acid chain; its full sequence is Centromere protein K (274 aa).

Positions 1–21 are disordered; it reads MSGYQHELPPNISKTSPAPEE. Residues 96–159 adopt a coiled-coil conformation; that stretch reads KEELEKIAQE…NQLTAFSEKR (64 aa).

This sequence belongs to the CENP-K/MCM22 family.

The protein resides in the nucleus. It localises to the chromosome. Its subcellular location is the centromere. It is found in the kinetochore. Functionally, probable component of a centromeric complex involved in assembly of kinetochore proteins, mitotic progression and chromosome segregation. This Xenopus laevis (African clawed frog) protein is Centromere protein K (cenpk).